We begin with the raw amino-acid sequence, 255 residues long: Expansin-A25 (255 aa).

The N-terminal stretch at 1–26 (MEYAILFATSLVITVLAASGFAPAHG) is a signal peptide. Positions 45 to 160 (GGACGYGNLY…QQVKCWRQGG (116 aa)) constitute an Expansin-like EG45 domain. Residues 170–249 (FFELVLVSNV…WWSFGMTFTS (80 aa)) enclose the Expansin-like CBD domain.

It belongs to the expansin family. Expansin A subfamily. Expressed in panicles and flowers.

It is found in the secreted. Its subcellular location is the cell wall. It localises to the membrane. May cause loosening and extension of plant cell walls by disrupting non-covalent bonding between cellulose microfibrils and matrix glucans. No enzymatic activity has been found. May be required for rapid internodal elongation in deepwater rice during submergence. The protein is Expansin-A25 (EXPA25) of Oryza sativa subsp. japonica (Rice).